The following is a 1220-amino-acid chain: DNA-directed RNA polymerase subunit beta (1220 aa).

The protein belongs to the RNA polymerase beta chain family. As to quaternary structure, the RNAP catalytic core consists of 2 alpha, 1 beta, 1 beta' and 1 omega subunit. When a sigma factor is associated with the core the holoenzyme is formed, which can initiate transcription.

It catalyses the reaction RNA(n) + a ribonucleoside 5'-triphosphate = RNA(n+1) + diphosphate. Functionally, DNA-dependent RNA polymerase catalyzes the transcription of DNA into RNA using the four ribonucleoside triphosphates as substrates. This is DNA-directed RNA polymerase subunit beta from Mesomycoplasma hyopneumoniae (strain 7448) (Mycoplasma hyopneumoniae).